Here is a 278-residue protein sequence, read N- to C-terminus: Large ribosomal subunit protein uL2 (278 aa).

Disordered regions lie at residues 29 to 57 and 224 to 278; these read PEKSLVRPLHSKGGRNNAGRVTVRHQGGG and VAMN…NKKR. Residues 258-278 show a composition bias toward basic residues; sequence RSPKKASNKYIVRRRKTNKKR.

It belongs to the universal ribosomal protein uL2 family. As to quaternary structure, part of the 50S ribosomal subunit. Forms a bridge to the 30S subunit in the 70S ribosome.

Functionally, one of the primary rRNA binding proteins. Required for association of the 30S and 50S subunits to form the 70S ribosome, for tRNA binding and peptide bond formation. It has been suggested to have peptidyltransferase activity; this is somewhat controversial. Makes several contacts with the 16S rRNA in the 70S ribosome. The sequence is that of Large ribosomal subunit protein uL2 from Streptomyces griseus subsp. griseus (strain JCM 4626 / CBS 651.72 / NBRC 13350 / KCC S-0626 / ISP 5235).